Reading from the N-terminus, the 64-residue chain is DNA gyrase inhibitor YacG (64 aa).

Zn(2+)-binding residues include C10, C13, C29, and C33.

It belongs to the DNA gyrase inhibitor YacG family. As to quaternary structure, interacts with GyrB. It depends on Zn(2+) as a cofactor.

Functionally, inhibits all the catalytic activities of DNA gyrase by preventing its interaction with DNA. Acts by binding directly to the C-terminal domain of GyrB, which probably disrupts DNA binding by the gyrase. The protein is DNA gyrase inhibitor YacG of Pectobacterium carotovorum subsp. carotovorum (strain PC1).